We begin with the raw amino-acid sequence, 146 residues long: 3-hydroxyacyl-[acyl-carrier-protein] dehydratase FabZ (146 aa).

Residue His49 is part of the active site.

Belongs to the thioester dehydratase family. FabZ subfamily.

It is found in the cytoplasm. The enzyme catalyses a (3R)-hydroxyacyl-[ACP] = a (2E)-enoyl-[ACP] + H2O. Functionally, involved in unsaturated fatty acids biosynthesis. Catalyzes the dehydration of short chain beta-hydroxyacyl-ACPs and long chain saturated and unsaturated beta-hydroxyacyl-ACPs. The polypeptide is 3-hydroxyacyl-[acyl-carrier-protein] dehydratase FabZ (Pseudomonas putida (strain ATCC 700007 / DSM 6899 / JCM 31910 / BCRC 17059 / LMG 24140 / F1)).